Reading from the N-terminus, the 311-residue chain is Pyrimidine-specific ribonucleoside hydrolase RihA (311 aa).

His240 is an active-site residue.

This sequence belongs to the IUNH family. RihA subfamily.

In terms of biological role, hydrolyzes with equal efficiency cytidine or uridine to ribose and cytosine or uracil, respectively. The polypeptide is Pyrimidine-specific ribonucleoside hydrolase RihA (Escherichia coli O81 (strain ED1a)).